The chain runs to 158 residues: SsrA-binding protein (158 aa).

The protein belongs to the SmpB family.

It is found in the cytoplasm. Functionally, required for rescue of stalled ribosomes mediated by trans-translation. Binds to transfer-messenger RNA (tmRNA), required for stable association of tmRNA with ribosomes. tmRNA and SmpB together mimic tRNA shape, replacing the anticodon stem-loop with SmpB. tmRNA is encoded by the ssrA gene; the 2 termini fold to resemble tRNA(Ala) and it encodes a 'tag peptide', a short internal open reading frame. During trans-translation Ala-aminoacylated tmRNA acts like a tRNA, entering the A-site of stalled ribosomes, displacing the stalled mRNA. The ribosome then switches to translate the ORF on the tmRNA; the nascent peptide is terminated with the 'tag peptide' encoded by the tmRNA and targeted for degradation. The ribosome is freed to recommence translation, which seems to be the essential function of trans-translation. The chain is SsrA-binding protein from Bartonella henselae (strain ATCC 49882 / DSM 28221 / CCUG 30454 / Houston 1) (Rochalimaea henselae).